The chain runs to 194 residues: MASWWRAFPQAARRYPWPTNVLLYAGLFSAGDALQQRLRGGPADWRQTRRVATLAVTFHGNFNYVWLRLLERALPGRAPRTVLAKVLCDQTVGGPIALSAFYVGMSVLQGKDDIFLDLKQKFWNTYKSGLMYWPFVQLTNFSLVPVHWRTAYTGLCAFLWATFLCFSQQSGDGTLQSIFIFLRRKEASDKSPEK.

Residues 1 to 14 (MASWWRAFPQAARR) lie on the Cytoplasmic side of the membrane. The chain crosses the membrane as a helical span at residues 15-34 (YPWPTNVLLYAGLFSAGDAL). Positions 16-55 (PWPTNVLLYAGLFSAGDALQQRLRGGPADWRQTRRVATLA) are targeting to peroxisomes. The Lumenal segment spans residues 35–50 (QQRLRGGPADWRQTRR). A helical membrane pass occupies residues 51–67 (VATLAVTFHGNFNYVWL). At 68–91 (RLLERALPGRAPRTVLAKVLCDQT) the chain is on the cytoplasmic side. The helical transmembrane segment at 92 to 110 (VGGPIALSAFYVGMSVLQG) threads the bilayer. The Lumenal segment spans residues 111–150 (KDDIFLDLKQKFWNTYKSGLMYWPFVQLTNFSLVPVHWRT). Residues 151-168 (AYTGLCAFLWATFLCFSQ) traverse the membrane as a helical segment. Residues 169–194 (QSGDGTLQSIFIFLRRKEASDKSPEK) are Cytoplasmic-facing.

Belongs to the peroxisomal membrane protein PXMP2/4 family. In terms of tissue distribution, isoform 1 and isoform 3 are expressed in the kidney (at protein level). Isoform 1 is expressed in the kidney, spleen, heart, brain, lung and liver. Isoform 3 is expressed in the kidney. Isoform 1 and isoform 3 expression increase during development, reache their highest level in adulthood and decrease with aging.

The protein localises to the peroxisome membrane. It is found in the cytoplasm. Its function is as follows. Participates in reactive oxygen species metabolism by up- or down-regulation of the genes of antioxidant enzymes. Protective against the mitochondrial apoptotic cascade. Participates in reactive oxygen species metabolism by up- or down-regulation of the genes of antioxidant enzymes. The chain is Mpv17-like protein (Mpv17l) from Mus musculus (Mouse).